We begin with the raw amino-acid sequence, 257 residues long: Phosphonates import ATP-binding protein PhnC (257 aa).

Residues 2 to 246 (IEFRNVSKVY…KFAEIYGDVA (245 aa)) form the ABC transporter domain. 35-42 (GLSGAGKS) serves as a coordination point for ATP.

This sequence belongs to the ABC transporter superfamily. Phosphonates importer (TC 3.A.1.9.1) family. As to quaternary structure, the complex is composed of two ATP-binding proteins (PhnC), two transmembrane proteins (PhnE) and a solute-binding protein (PhnD).

It localises to the cell membrane. The enzyme catalyses phosphonate(out) + ATP + H2O = phosphonate(in) + ADP + phosphate + H(+). Functionally, part of the ABC transporter complex PhnCDE involved in phosphonates import. Responsible for energy coupling to the transport system. The chain is Phosphonates import ATP-binding protein PhnC from Bacillus thuringiensis subsp. konkukian (strain 97-27).